The chain runs to 355 residues: Peptide chain release factor 1 (355 aa).

At glutamine 229 the chain carries N5-methylglutamine. A disordered region spans residues 280–299 (LDRERSAARKGQVGSGDRSE).

This sequence belongs to the prokaryotic/mitochondrial release factor family. In terms of processing, methylated by PrmC. Methylation increases the termination efficiency of RF1.

The protein resides in the cytoplasm. Its function is as follows. Peptide chain release factor 1 directs the termination of translation in response to the peptide chain termination codons UAG and UAA. This Parvibaculum lavamentivorans (strain DS-1 / DSM 13023 / NCIMB 13966) protein is Peptide chain release factor 1.